The primary structure comprises 160 residues: Large ribosomal subunit protein uL16 (160 aa).

Positions 138 to 148 (KNLEVSSQENT) are enriched in polar residues. Residues 138-160 (KNLEVSSQENTKNNKESQEEVKQ) form a disordered region. Basic and acidic residues predominate over residues 149–160 (KNNKESQEEVKQ).

The protein belongs to the universal ribosomal protein uL16 family. Part of the 50S ribosomal subunit.

In terms of biological role, binds 23S rRNA and is also seen to make contacts with the A and possibly P site tRNAs. This is Large ribosomal subunit protein uL16 from Prochlorococcus marinus (strain MIT 9312).